Reading from the N-terminus, the 242-residue chain is 1-(5-phosphoribosyl)-5-[(5-phosphoribosylamino)methylideneamino] imidazole-4-carboxamide isomerase (242 aa).

Asp-8 functions as the Proton acceptor in the catalytic mechanism. Asp-130 acts as the Proton donor in catalysis.

This sequence belongs to the HisA/HisF family.

It localises to the cytoplasm. The catalysed reaction is 1-(5-phospho-beta-D-ribosyl)-5-[(5-phospho-beta-D-ribosylamino)methylideneamino]imidazole-4-carboxamide = 5-[(5-phospho-1-deoxy-D-ribulos-1-ylimino)methylamino]-1-(5-phospho-beta-D-ribosyl)imidazole-4-carboxamide. Its pathway is amino-acid biosynthesis; L-histidine biosynthesis; L-histidine from 5-phospho-alpha-D-ribose 1-diphosphate: step 4/9. The protein is 1-(5-phosphoribosyl)-5-[(5-phosphoribosylamino)methylideneamino] imidazole-4-carboxamide isomerase of Acidithiobacillus ferrooxidans (strain ATCC 53993 / BNL-5-31) (Leptospirillum ferrooxidans (ATCC 53993)).